The primary structure comprises 304 residues: Dermonecrotic toxin LiSicTox-betaIA1ii (304 aa).

The N-terminal stretch at 1-21 is a signal peptide; that stretch reads MLLCAVISFIVYAVFLQEANG. Positions 22–26 are excised as a propeptide; it reads HAAER. Histidine 38 is a catalytic residue. Positions 58 and 60 each coordinate Mg(2+). Catalysis depends on histidine 74, which acts as the Nucleophile. 2 cysteine pairs are disulfide-bonded: cysteine 78/cysteine 84 and cysteine 80/cysteine 223. Aspartate 118 is a binding site for Mg(2+).

The protein belongs to the arthropod phospholipase D family. Class II subfamily. Mg(2+) serves as cofactor. Expressed by the venom gland.

It localises to the secreted. It catalyses the reaction an N-(acyl)-sphingosylphosphocholine = an N-(acyl)-sphingosyl-1,3-cyclic phosphate + choline. The catalysed reaction is an N-(acyl)-sphingosylphosphoethanolamine = an N-(acyl)-sphingosyl-1,3-cyclic phosphate + ethanolamine. It carries out the reaction a 1-acyl-sn-glycero-3-phosphocholine = a 1-acyl-sn-glycero-2,3-cyclic phosphate + choline. The enzyme catalyses a 1-acyl-sn-glycero-3-phosphoethanolamine = a 1-acyl-sn-glycero-2,3-cyclic phosphate + ethanolamine. In terms of biological role, dermonecrotic toxins cleave the phosphodiester linkage between the phosphate and headgroup of certain phospholipids (sphingolipid and lysolipid substrates), forming an alcohol (often choline) and a cyclic phosphate. This toxin acts on sphingomyelin (SM) with low activity. It may also act on ceramide phosphoethanolamine (CPE), lysophosphatidylcholine (LPC) and lysophosphatidylethanolamine (LPE), but not on lysophosphatidylserine (LPS), and lysophosphatidylglycerol (LPG). It acts by transphosphatidylation, releasing exclusively cyclic phosphate products as second products. Induces dermonecrosis, hemolysis, increased vascular permeability, edema, inflammatory response, and platelet aggregation. In Loxosceles intermedia (Brown spider), this protein is Dermonecrotic toxin LiSicTox-betaIA1ii.